The chain runs to 288 residues: ATP synthase gamma chain (288 aa).

This sequence belongs to the ATPase gamma chain family. In terms of assembly, F-type ATPases have 2 components, CF(1) - the catalytic core - and CF(0) - the membrane proton channel. CF(1) has five subunits: alpha(3), beta(3), gamma(1), delta(1), epsilon(1). CF(0) has three main subunits: a, b and c.

Its subcellular location is the cell inner membrane. Functionally, produces ATP from ADP in the presence of a proton gradient across the membrane. The gamma chain is believed to be important in regulating ATPase activity and the flow of protons through the CF(0) complex. The chain is ATP synthase gamma chain from Vibrio parahaemolyticus serotype O3:K6 (strain RIMD 2210633).